Consider the following 634-residue polypeptide: 1,4-alpha-glucan branching enzyme GlgB (634 aa).

Residue Asp-305 is the Nucleophile of the active site. Glu-357 serves as the catalytic Proton donor.

The protein belongs to the glycosyl hydrolase 13 family. GlgB subfamily. As to quaternary structure, monomer.

The enzyme catalyses Transfers a segment of a (1-&gt;4)-alpha-D-glucan chain to a primary hydroxy group in a similar glucan chain.. It functions in the pathway glycan biosynthesis; glycogen biosynthesis. In terms of biological role, catalyzes the formation of the alpha-1,6-glucosidic linkages in glycogen by scission of a 1,4-alpha-linked oligosaccharide from growing alpha-1,4-glucan chains and the subsequent attachment of the oligosaccharide to the alpha-1,6 position. The polypeptide is 1,4-alpha-glucan branching enzyme GlgB (Lactiplantibacillus plantarum (strain ATCC BAA-793 / NCIMB 8826 / WCFS1) (Lactobacillus plantarum)).